An 883-amino-acid polypeptide reads, in one-letter code: 3-hydroxy-3-methylglutaryl-coenzyme A reductase (883 aa).

Topologically, residues 1–9 are cytoplasmic; the sequence is MLSRLFRMH. Residues 10-39 traverse the membrane as a helical segment; the sequence is GQFVASHPWEVIVGTVTLTICMMSMNMFTG. Residues 40-56 are Lumenal-facing; it reads NDKICGWNYACPKFEED. A helical transmembrane segment spans residues 57–78; sequence VLSSDIIILTITRCIAILYIYF. Residues 79-89 are Cytoplasmic-facing; the sequence is QFQNLRQLGSK. A helical membrane pass occupies residues 90 to 114; that stretch reads YILGIAGLFTIFSSFVFSTVVIHFL. Over 115–123 the chain is Lumenal; the sequence is DKELTGLNE. The chain crosses the membrane as a helical span at residues 124 to 149; the sequence is ALPFFLLLIDLSKASALAKFALSSNS. Residues 150–159 lie on the Cytoplasmic side of the membrane; that stretch reads QDEVRDNIAR. The chain crosses the membrane as a helical span at residues 160–187; sequence GMAILGPTFTLEALVECLVIGVGTMSGV. The Lumenal segment spans residues 188 to 191; that stretch reads RQLE. Residues 192–220 form a helical membrane-spanning segment; it reads IMCCFGCMSVLANYFAFMTFFPACVSLVL. Topologically, residues 221–249 are cytoplasmic; it reads ELSRESREGRPIWQLSQFASVLEEEEDNK. Residues 250 to 276 traverse the membrane as a helical segment; sequence PNPVTQRVKMIMSLGLVLVHAHSRWIS. The Lumenal portion of the chain corresponds to 277–316; that stretch reads EPSSQNSTSISDHEVTTMLDDMMPKRVEPSMPLWQFYLSR. The N-linked (GlcNAc...) asparagine glycan is linked to Asn282. A helical membrane pass occupies residues 317–341; the sequence is MVTMDVEQIITLGLALLLAVKYIFF. Residues 342-883 lie on the Cytoplasmic side of the membrane; the sequence is EQTETESTFS…LPGTCTKKAA (542 aa). The segment at 373–396 is disordered; it reads REPEQEKTVHVSTTEEASSKEETE. Active-site charge relay system residues include Glu554, Lys686, and Asp762. The Proton donor role is filled by His861.

This sequence belongs to the HMG-CoA reductase family. Homotetramer. Homodimer.

It localises to the endoplasmic reticulum membrane. Its subcellular location is the peroxisome membrane. The enzyme catalyses (R)-mevalonate + 2 NADP(+) + CoA = (3S)-3-hydroxy-3-methylglutaryl-CoA + 2 NADPH + 2 H(+). It participates in metabolic intermediate biosynthesis; (R)-mevalonate biosynthesis; (R)-mevalonate from acetyl-CoA: step 3/3. Its function is as follows. Catalyzes the conversion of (3S)-hydroxy-3-methylglutaryl-CoA (HMG-CoA) to mevalonic acid, the rate-limiting step in the synthesis of cholesterol and other isoprenoids, thus plays a critical role in cellular cholesterol homeostasis. This is 3-hydroxy-3-methylglutaryl-coenzyme A reductase (hmgcr) from Xenopus laevis (African clawed frog).